Here is a 362-residue protein sequence, read N- to C-terminus: Sphingosine 1-phosphate receptor 1 (362 aa).

Over 1–25 the chain is Extracellular; the sequence is MDDLIARHYNFTGKFRKVHKDPGLK. An N-linked (GlcNAc...) asparagine glycan is attached at asparagine 10. The helical transmembrane segment at 26 to 47 threads the bilayer; that stretch reads ADSVVFIIVCCFIILENVLVLL. Over 48–61 the chain is Cytoplasmic; the sequence is TIWRTKKFHKPMYY. The helical transmembrane segment at 62 to 83 threads the bilayer; it reads FIGNLALSDLLAGVVYTANILL. At 84-95 the chain is on the extracellular side; it reads SGANTYKLTPTQ. Residues 96 to 117 form a helical membrane-spanning segment; sequence WFFREGSMFVALAASVFSLLAI. 99–100 serves as a coordination point for sphing-4-enine 1-phosphate; it reads RE. Residues 118–139 lie on the Cytoplasmic side of the membrane; that stretch reads AIERHLTMLKMKLHNNGKTCRV. A helical membrane pass occupies residues 140 to 161; the sequence is FMLISTVWFIAAILGGLPVMGW. At 162-175 the chain is on the extracellular side; it reads NCIDSMNNCSTVLP. A disulfide bridge connects residues cysteine 163 and cysteine 170. The N-linked (GlcNAc...) asparagine glycan is linked to asparagine 169. Residues 176-203 traverse the membrane as a helical segment; sequence LYHKAYILFCTTVFSVILMAIVILYARI. Residues 204–238 lie on the Cytoplasmic side of the membrane; sequence YALVRTRSRKLVFRKVANGRGSNKSSEKSMALLKT. The helical transmembrane segment at 239 to 259 threads the bilayer; it reads VIIVLSCFIACWAPLFILLLL. 246–250 lines the sphing-4-enine 1-phosphate pocket; the sequence is FIACW. The Extracellular portion of the chain corresponds to 260–270; the sequence is DVACQTLTCSI. Cysteine 263 and cysteine 268 form a disulfide bridge. Residues 271-291 traverse the membrane as a helical segment; sequence LYKAEWFLALAVLNSAMNPLI. The Cytoplasmic portion of the chain corresponds to 292 to 362; that stretch reads YTLTSNEMRR…VSSGNITSSS (71 aa). Cysteine 309 carries the S-palmitoyl cysteine lipid modification. Residues 328–362 form a disordered region; that stretch reads FSRSKSDNSSHPNKDEPEYSPRETIVSSGNITSSS. The span at 329–348 shows a compositional bias: basic and acidic residues; it reads SRSKSDNSSHPNKDEPEYSP. Residues 352 to 362 are compositionally biased toward polar residues; that stretch reads IVSSGNITSSS.

This sequence belongs to the G-protein coupled receptor 1 family.

It localises to the cell membrane. Functionally, G-protein coupled receptor for the bioactive lysosphingolipid sphingosine 1-phosphate (S1P) that seems to be coupled to the G(i) subclass of heteromeric G proteins. Signaling leads to the activation of RAC1, SRC, PTK2/FAK1 and MAP kinases. Plays an important role in cell migration, probably via its role in the reorganization of the actin cytoskeleton and the formation of lamellipodia in response to stimuli that increase the activity of the sphingosine kinase SPHK1. Required for normal chemotaxis toward sphingosine 1-phosphate. This chain is Sphingosine 1-phosphate receptor 1 (s1pr1), found in Danio rerio (Zebrafish).